The sequence spans 413 residues: Probable alpha-tubulin polyglutamylase Ttll1 (413 aa).

The TTL domain maps to 2 to 370 (ASKKLKYKTD…DDWNDDSSKT (369 aa)). Residues 184 to 187 (SRYI), Lys-197, and Asp-199 contribute to the ATP site.

This sequence belongs to the tubulin polyglutamylase family.

The protein localises to the cytoplasm. The protein resides in the cytoskeleton. It localises to the cilium basal body. It is found in the contractile vacuole. Its function is as follows. Probable tubulin polyglutamylase with a strong preference for alpha-tubulin. Modifies alpha-tubulin, generating side chains of glutamate on the gamma-carboxyl groups of specific glutamate residues within the C-terminal tail of alpha-tubulin. The sequence is that of Probable alpha-tubulin polyglutamylase Ttll1 (Ttll1) from Tetrahymena thermophila (strain SB210).